The primary structure comprises 274 residues: Large ribosomal subunit protein uL2 (274 aa).

2 disordered regions span residues 35-55 (FGKK…RHRG) and 224-274 (AMNP…KLKG). The segment covering 45-55 (NHGRITTRHRG) has biased composition (basic residues). Basic and acidic residues predominate over residues 263–274 (KSSDKYIKKLKG).

The protein belongs to the universal ribosomal protein uL2 family. In terms of assembly, part of the 50S ribosomal subunit. Forms a bridge to the 30S subunit in the 70S ribosome.

In terms of biological role, one of the primary rRNA binding proteins. Required for association of the 30S and 50S subunits to form the 70S ribosome, for tRNA binding and peptide bond formation. It has been suggested to have peptidyltransferase activity; this is somewhat controversial. Makes several contacts with the 16S rRNA in the 70S ribosome. The chain is Large ribosomal subunit protein uL2 from Wolbachia pipientis subsp. Culex pipiens (strain wPip).